Here is a 210-residue protein sequence, read N- to C-terminus: Outer-membrane lipoprotein LolB (210 aa).

An N-terminal signal peptide occupies residues methionine 1–glycine 29. The N-palmitoyl cysteine moiety is linked to residue cysteine 30. Cysteine 30 carries the S-diacylglycerol cysteine lipid modification.

This sequence belongs to the LolB family. In terms of assembly, monomer.

It is found in the cell outer membrane. Plays a critical role in the incorporation of lipoproteins in the outer membrane after they are released by the LolA protein. The protein is Outer-membrane lipoprotein LolB of Coxiella burnetii (strain CbuG_Q212) (Coxiella burnetii (strain Q212)).